A 694-amino-acid chain; its full sequence is Elongation factor G (694 aa).

The tr-type G domain occupies 6–288 (KLYRNIGIAA…GVIEYLPSPT (283 aa)). Residues 15–22 (AHVDAGKT), 86–90 (DTPGH), and 140–143 (NKMD) each bind GTP.

This sequence belongs to the TRAFAC class translation factor GTPase superfamily. Classic translation factor GTPase family. EF-G/EF-2 subfamily.

It is found in the cytoplasm. In terms of biological role, catalyzes the GTP-dependent ribosomal translocation step during translation elongation. During this step, the ribosome changes from the pre-translocational (PRE) to the post-translocational (POST) state as the newly formed A-site-bound peptidyl-tRNA and P-site-bound deacylated tRNA move to the P and E sites, respectively. Catalyzes the coordinated movement of the two tRNA molecules, the mRNA and conformational changes in the ribosome. The sequence is that of Elongation factor G from Legionella pneumophila (strain Lens).